Consider the following 338-residue polypeptide: Protein WVD2-like 2 (338 aa).

Residues 1–14 (MGRELVDKHMDKKA) are compositionally biased toward basic and acidic residues. A disordered region spans residues 1–150 (MGRELVDKHM…SFSVASSSAT (150 aa)). Composition is skewed to polar residues over residues 15–37 (NSLT…STNE) and 59–69 (QGITETPGSHK). Low complexity predominate over residues 100 to 115 (NNSLGNGASHNSSSAS). Basic and acidic residues predominate over residues 128-138 (RIPDHKMHHDE). Residues 177 to 214 (REFYQKLEEKQKALEAEKRENEKRLKEEQEAVTKQLRK) adopt a coiled-coil conformation. The disordered stretch occupies residues 222–338 (PVPSFYQEGP…GENGVGVVEE (117 aa)). Residues 288-300 (TNSVPRTPNSSSK) show a composition bias toward polar residues.

This sequence belongs to the TPX2 family. In terms of tissue distribution, expressed in seedlings.

The protein resides in the cytoplasm. It localises to the cytoskeleton. Functionally, microtubule-associated protein (MAP) that regulates the orientation of interphase cortical microtubules. The polypeptide is Protein WVD2-like 2 (Arabidopsis thaliana (Mouse-ear cress)).